The primary structure comprises 79 residues: Acyl carrier protein (79 aa).

The 76-residue stretch at 2–77 (SDIADKVKKI…DAIDYIEKQK (76 aa)) folds into the Carrier domain. S37 carries the post-translational modification O-(pantetheine 4'-phosphoryl)serine.

It belongs to the acyl carrier protein (ACP) family. Post-translationally, 4'-phosphopantetheine is transferred from CoA to a specific serine of apo-ACP by AcpS. This modification is essential for activity because fatty acids are bound in thioester linkage to the sulfhydryl of the prosthetic group.

Its subcellular location is the cytoplasm. It functions in the pathway lipid metabolism; fatty acid biosynthesis. In terms of biological role, carrier of the growing fatty acid chain in fatty acid biosynthesis. The sequence is that of Acyl carrier protein from Gluconobacter oxydans (strain 621H) (Gluconobacter suboxydans).